The primary structure comprises 427 residues: Glutamyl-tRNA reductase (427 aa).

Substrate contacts are provided by residues threonine 50–arginine 53, serine 110, glutamate 115–glutamine 117, and glutamine 121. The active-site Nucleophile is the cysteine 51. Residue glycine 190–glycine 195 participates in NADP(+) binding.

This sequence belongs to the glutamyl-tRNA reductase family. As to quaternary structure, homodimer.

It carries out the reaction (S)-4-amino-5-oxopentanoate + tRNA(Glu) + NADP(+) = L-glutamyl-tRNA(Glu) + NADPH + H(+). Its pathway is porphyrin-containing compound metabolism; protoporphyrin-IX biosynthesis; 5-aminolevulinate from L-glutamyl-tRNA(Glu): step 1/2. Its function is as follows. Catalyzes the NADPH-dependent reduction of glutamyl-tRNA(Glu) to glutamate 1-semialdehyde (GSA). In Campylobacter concisus (strain 13826), this protein is Glutamyl-tRNA reductase.